The primary structure comprises 579 residues: Small conductance calcium-activated potassium channel protein 2 (579 aa).

Disordered stretches follow at residues 1–54 (MSSC…AAAA) and 90–115 (TGGG…KKNQ). The span at 90 to 103 (TGGGGGGGGSGHGS) shows a compositional bias: gly residues. Residues 138 to 158 (ALIFGMFGIVVMVIETELSWG) traverse the membrane as a helical segment. Residue tyrosine 160 is modified to Phosphotyrosine. Residues 168–188 (LALKCLISLSTIILLGLIIVY) form a helical membrane-spanning segment. The chain crosses the membrane as a helical span at residues 214 to 234 (IFFICLEILVCAIHPIPGNYT). A helical transmembrane segment spans residues 256 to 276 (IILSIPMFLRLYLIARVMLLH). A helical transmembrane segment spans residues 305–325 (LMTICPGTVLLVFSISLWIIA). The pore-forming intramembrane region spans 345–365 (FLGAMWLISITFLSIGYGDMV). The helical transmembrane segment at 374–394 (VCLLTGIMGAGCTALVVAVVA) threads the bilayer. The calmodulin-binding stretch occupies residues 412–488 (DTQLTKRVKN…LVDLAKTQNI (77 aa)). The disordered stretch occupies residues 551-579 (VTYNAERSRSSSRRRRSSSTAPPTSSESS). A compositionally biased stretch (low complexity) spans 568–579 (SSTAPPTSSESS).

Belongs to the potassium channel KCNN family. KCa2.2/KCNN2 subfamily. As to quaternary structure, homodimer. Heteromultimer with KCNN1 and KCNN3. The complex is composed of 4 channel subunits each of which binds to a calmodulin subunit which regulates the channel activity through calcium-binding. Interacts (via N-terminal domain) with MPP2. In terms of tissue distribution, expressed in atrial myocytes (at protein level). Widely expressed.

Its subcellular location is the membrane. The protein resides in the cytoplasm. It is found in the myofibril. The protein localises to the sarcomere. It localises to the z line. The catalysed reaction is K(+)(in) = K(+)(out). Inhibited by bee venom neurotoxin apamin. Inhibited by UCL 1684 and tetraethylammonium (TEA). In terms of biological role, small conductance calcium-activated potassium channel that mediates the voltage-independent transmembrane transfer of potassium across the cell membrane through a constitutive interaction with calmodulin which binds the intracellular calcium allowing its opening. The current is characterized by a voltage-independent activation, an intracellular calcium concentration increase-dependent activation and a single-channel conductance of about 3 picosiemens. Also presents an inwardly rectifying current, thus reducing its already small outward conductance of potassium ions, which is particularly the case when the membrane potential displays positive values, above + 20 mV. The inward rectification could be due to a blockade of the outward current by intracellular divalent cations such as calcium and magnesium and could also be due to an intrinsic property of the channel pore, independent of intracellular divalent ions. There are three positively charged amino acids in the S6 transmembrane domain, close to the pore, that collectively control the conductance and rectification through an electrostatic mechanism. Additionally, electrostatic contributions from these residues also play an important role in determining the intrinsic open probability of the channel in the absence of calcium, affecting the apparent calcium affinity for activation. Forms an heteromeric complex with calmodulin, which is constitutively associated in a calcium-independent manner. Channel opening is triggered when calcium binds the calmodulin resulting in a rotary movement leading to the formation of the dimeric complex to open the gate. Plays a role in the repolarization phase of cardiac action potential. The protein is Small conductance calcium-activated potassium channel protein 2 of Homo sapiens (Human).